The primary structure comprises 901 residues: HTH-type transcriptional regulator MalT (901 aa).

39–46 (SPAGYGKT) provides a ligand contact to ATP. The HTH luxR-type domain occupies 829-894 (ELIRTSPLTQ…AAVQHAQKLL (66 aa)). The segment at residues 853 to 872 (NEQIAGELEVAATTIKTHIR) is a DNA-binding region (H-T-H motif).

It belongs to the MalT family. As to quaternary structure, monomer in solution. Oligomerizes to an active state in the presence of the positive effectors ATP and maltotriose.

With respect to regulation, activated by ATP and maltotriose, which are both required for DNA binding. Positively regulates the transcription of the maltose regulon whose gene products are responsible for uptake and catabolism of malto-oligosaccharides. Specifically binds to the promoter region of its target genes, recognizing a short DNA motif called the MalT box. The chain is HTH-type transcriptional regulator MalT from Escherichia coli O6:K15:H31 (strain 536 / UPEC).